The chain runs to 274 residues: Ribosomal RNA small subunit methyltransferase A (274 aa).

S-adenosyl-L-methionine-binding residues include N28, L30, G55, E77, D103, and N122.

The protein belongs to the class I-like SAM-binding methyltransferase superfamily. rRNA adenine N(6)-methyltransferase family. RsmA subfamily.

The protein resides in the cytoplasm. It catalyses the reaction adenosine(1518)/adenosine(1519) in 16S rRNA + 4 S-adenosyl-L-methionine = N(6)-dimethyladenosine(1518)/N(6)-dimethyladenosine(1519) in 16S rRNA + 4 S-adenosyl-L-homocysteine + 4 H(+). In terms of biological role, specifically dimethylates two adjacent adenosines (A1518 and A1519) in the loop of a conserved hairpin near the 3'-end of 16S rRNA in the 30S particle. May play a critical role in biogenesis of 30S subunits. In Rhizobium meliloti (strain 1021) (Ensifer meliloti), this protein is Ribosomal RNA small subunit methyltransferase A.